A 140-amino-acid polypeptide reads, in one-letter code: Large ribosomal subunit protein bL17 (140 aa).

Belongs to the bacterial ribosomal protein bL17 family. In terms of assembly, part of the 50S ribosomal subunit. Contacts protein L32.

The protein is Large ribosomal subunit protein bL17 of Hyphomonas neptunium (strain ATCC 15444).